The primary structure comprises 146 residues: ATP synthase F(0) complex subunit C2, mitochondrial (146 aa).

The transit peptide at 1-71 (MYACSKFVST…RSFQTSAISR (71 aa)) directs the protein to the mitochondrion. Residues 87 to 107 (VGVAGSGAGIGTVFGSLIIGY) form a helical membrane-spanning segment. Residue K114 is modified to N6,N6,N6-trimethyllysine. The chain crosses the membrane as a helical span at residues 122–142 (ILGFALSEAMGLFCLMVAFLI).

This sequence belongs to the ATPase C chain family. F-type ATPases have 2 components, CF(1) - the catalytic core - and CF(0) - the membrane proton channel. CF(1) has five subunits: alpha(3), beta(3), gamma(1), delta(1), epsilon(1). CF(0) has three main subunits: a, b and c. Interacts with DNAJC30; interaction is direct. In terms of processing, trimethylated by ATPSCKMT at Lys-114. Methylation is required for proper incorporation of the C subunit into the ATP synthase complex and mitochondrial respiration.

Its subcellular location is the mitochondrion membrane. Its function is as follows. Mitochondrial membrane ATP synthase (F(1)F(0) ATP synthase or Complex V) produces ATP from ADP in the presence of a proton gradient across the membrane which is generated by electron transport complexes of the respiratory chain. F-type ATPases consist of two structural domains, F(1) - containing the extramembraneous catalytic core and F(0) - containing the membrane proton channel, linked together by a central stalk and a peripheral stalk. During catalysis, ATP synthesis in the catalytic domain of F(1) is coupled via a rotary mechanism of the central stalk subunits to proton translocation. Part of the complex F(0) domain. A homomeric c-ring of probably 10 subunits is part of the complex rotary element. The protein is ATP synthase F(0) complex subunit C2, mitochondrial of Mus musculus (Mouse).